Reading from the N-terminus, the 153-residue chain is Transcription antitermination protein NusB (153 aa).

It belongs to the NusB family.

Functionally, involved in transcription antitermination. Required for transcription of ribosomal RNA (rRNA) genes. Binds specifically to the boxA antiterminator sequence of the ribosomal RNA (rrn) operons. This Clostridium tetani (strain Massachusetts / E88) protein is Transcription antitermination protein NusB.